Consider the following 585-residue polypeptide: Arginine--tRNA ligase (585 aa).

The 'HIGH' region signature appears at 131-141; that stretch reads ANPTGPMHVGH.

The protein belongs to the class-I aminoacyl-tRNA synthetase family. Monomer.

It localises to the cytoplasm. The catalysed reaction is tRNA(Arg) + L-arginine + ATP = L-arginyl-tRNA(Arg) + AMP + diphosphate. The protein is Arginine--tRNA ligase of Rhizobium leguminosarum bv. trifolii (strain WSM2304).